A 470-amino-acid chain; its full sequence is Serine hydroxymethyltransferase 5 (470 aa).

The residue at position 244 (Lys244) is an N6-(pyridoxal phosphate)lysine.

The protein belongs to the SHMT family. In terms of assembly, homotetramer. It depends on pyridoxal 5'-phosphate as a cofactor.

The protein localises to the cytoplasm. It catalyses the reaction (6R)-5,10-methylene-5,6,7,8-tetrahydrofolate + glycine + H2O = (6S)-5,6,7,8-tetrahydrofolate + L-serine. It participates in one-carbon metabolism; tetrahydrofolate interconversion. Functionally, catalyzes the interconversion of serine and glycine. The protein is Serine hydroxymethyltransferase 5 (SHM5) of Arabidopsis thaliana (Mouse-ear cress).